A 186-amino-acid chain; its full sequence is MISSNDFRTGTSIELDGSVWRVVEFLHVKPGKGSAFVRTKLKNAQTGSVVERTFRAGETVPQATLEKRTMQHTYKEGEQYVFMDMETYEEVRLSPEQMGTTVNYIKEEMEADVLFWNDTVLEVQLPTSVILEVTDTDPGVKGDTATGGTKPAIVETGAQVMVPLFISIGEKIKVDTRDGSYLGRET.

The protein belongs to the elongation factor P family.

The protein resides in the cytoplasm. It functions in the pathway protein biosynthesis; polypeptide chain elongation. Its function is as follows. Involved in peptide bond synthesis. Stimulates efficient translation and peptide-bond synthesis on native or reconstituted 70S ribosomes in vitro. Probably functions indirectly by altering the affinity of the ribosome for aminoacyl-tRNA, thus increasing their reactivity as acceptors for peptidyl transferase. This chain is Elongation factor P, found in Crocosphaera subtropica (strain ATCC 51142 / BH68) (Cyanothece sp. (strain ATCC 51142)).